Here is a 1436-residue protein sequence, read N- to C-terminus: MDQDVMDFFDFSKEFKREVAPQGYISSDPKMMATDSIDSKVPKREVIGTEYVTEIVAKEKGLLNRTLRDECPQSKRKHTLDDLDTDDEEEETEIRRDDEYYKKYRFNLNRDKNLPIYAKREEILAAINANPVVILKGETGCGKTTQVPQYILDEGYKSGKYCNIVVTQPRRIAAISIANRVCQEREWQQDTVCSYQVGLHRPTSLEDTRLLYCTTGVLLNNLIRNKTLTHYTHIVLDEVHERDQDMDFLLIVVRRLLATNSRHVKIILMSATIDARELSDYFTTTNSIPPVISASHGRKHSIEKFYRDQMGSIKWKEEEDDQLVPQINDHGYRAAVKIIMVIDNMEREGAIHSRMSYDEALRYGAVLIFLPGIYEIDTMAENITLMLENDRNVKVFIVRCFSLMTPENQRDVFHPPPPGFRKIILTTNIAESSITVPDVSYVIDFCLTKVLVTDTATNFSSLRLTWASKANCRQRAGRVGRLRSGRVYRMVNKSFYQREMSEFGIPEMLRLPLQNSVLRAKELEMGSPVEILALALSPPNLSDIQNTILLLKEVGALFLTVDGVYNAMDGDVTYWGTIMSRLPLDPRLSRLIILGYVFNLLEEAIIMAAGLSMRGLYVHEGSSSRSTRAQFDSFWMHYIFADGSGSDLVAIWRVYLTYLNMVEIGHEQESAIRWANRFHVSLRSLKEMHLLVQELRVRCTNLGLIPFSVNPSQIMDDREKSFILKVIIAGAFYPNYFTRSKEMWNEHDRHIYQTISGHDPCRTVYFTNFGPSCMGELYTRRIKDFFHDARIPPENMDVTFQPGSEKVFVTFKQDDCVADSSKLVSVPGRVQSEVYKAVRMRLSCMQRIIRIMRPKQFMNYVQERGIGDVIEGRWIPPTKPLNVELLALPSVFSKTITGLITGIINCGKFYFQPLSLAECIRNMSEIFNAPQQLRKYVVDACDISKGMMVLAKRDSNFQRATVIRPENQSNRQPMFYVRFIDYGDCALLPMQQLRFMSEELIQQYGDLPPRVFECRLALVQPSSMVHGNYSWPTAANDLLQFVAKCGRIDIEVYSLFNNVAAVLIHMRNGTINDKLVAQKLCRRSDEDYMSRKDHDFRLRSQESGRYLSSAERQQINEEYLRSCQLPQDFDLPPPPQDLCGTNVRLKGPYSPLECSMQSIIRVGSSKRVNIDSASVNAVLLDTDPQDHHDHLIVAHATVESPNGQTLTARGTTLMPNVQGYGALMVMLFCPTMQLKCNEEGTSYVSILAGLGCDPVTGEPYYAEHDVLINLDVNILEDDLVLINQIRYYIDSVFFNFKEENYPAVSVNERESIYTQLRSLIKRLLSKDRSYIGKNMSNSDFVWETNPELPMPNEPFGKRAIFPMHSLTELKEDDMGRLMNLRENCSMLHKWRNFEGTLPHMTCKLCNQLLESVPQLRLHLLTILHRDREKQIDFCNQ.

Residues 124 to 291 (LAAINANPVV…FTTTNSIPPV (168 aa)) form the Helicase ATP-binding domain. 137–144 (GETGCGKT) contacts ATP. The short motif at 237 to 240 (DEVH) is the DEAH box element. The 188-residue stretch at 337–524 (KIIMVIDNME…NSVLRAKELE (188 aa)) folds into the Helicase C-terminal domain. Residues 940–1003 (ACDISKGMMV…RFMSEELIQQ (64 aa)) form the Tudor domain.

Belongs to the DEAD box helicase family. DEAH subfamily.

It localises to the cytoplasm. It catalyses the reaction ATP + H2O = ADP + phosphate + H(+). In terms of biological role, probable ATP-binding RNA helicase which plays a central role during spermatogenesis and oogenesis by repressing transposable elements and preventing their mobilization, which is essential for the germline integrity. Acts via the piRNA metabolic process, which mediates the repression of transposable elements during meiosis by forming complexes composed of piRNAs and Piwi and govern the methylation and subsequent repression of transposons. Involved in the repression of LTR retrotransposon copia. Also involved in telomere regulation by repressing specialized telomeric retroelements HeT-A, TAHRE, and TART; Drosophila telomeres being maintained by transposition of specialized telomeric retroelements. Involved in telomeric trans-silencing, a repression mechanism by which a transposon or a transgene inserted in subtelomeric heterochromatin has the capacity to repress in trans in the female germline, a homologous transposon, or transgene located in euchromatin. Involved in the repression of testis-expressed Stellate genes by the homologous Su(Ste) repeats. Required for anteroposterior and dorsoventral axis formation during oogenesis. The polypeptide is Probable ATP-dependent RNA helicase spindle-E (spn-E) (Drosophila yakuba (Fruit fly)).